A 428-amino-acid chain; its full sequence is Serine--tRNA ligase (428 aa).

235–237 contacts L-serine; the sequence is TAE. Position 266–268 (266–268) interacts with ATP; it reads RSE. Residue glutamate 289 coordinates L-serine. 353–356 serves as a coordination point for ATP; sequence EISS. Serine 389 is a binding site for L-serine.

This sequence belongs to the class-II aminoacyl-tRNA synthetase family. Type-1 seryl-tRNA synthetase subfamily. As to quaternary structure, homodimer. The tRNA molecule binds across the dimer.

It localises to the cytoplasm. The catalysed reaction is tRNA(Ser) + L-serine + ATP = L-seryl-tRNA(Ser) + AMP + diphosphate + H(+). It carries out the reaction tRNA(Sec) + L-serine + ATP = L-seryl-tRNA(Sec) + AMP + diphosphate + H(+). It participates in aminoacyl-tRNA biosynthesis; selenocysteinyl-tRNA(Sec) biosynthesis; L-seryl-tRNA(Sec) from L-serine and tRNA(Sec): step 1/1. Its function is as follows. Catalyzes the attachment of serine to tRNA(Ser). Is also able to aminoacylate tRNA(Sec) with serine, to form the misacylated tRNA L-seryl-tRNA(Sec), which will be further converted into selenocysteinyl-tRNA(Sec). The polypeptide is Serine--tRNA ligase (Shewanella baltica (strain OS223)).